Reading from the N-terminus, the 190-residue chain is Putative glutathione-dependent formaldehyde-activating enzyme (190 aa).

Residues phenylalanine 19 to aspartate 165 enclose the CENP-V/GFA domain. Zn(2+)-binding residues include cysteine 26, cysteine 28, cysteine 47, cysteine 49, cysteine 52, cysteine 94, and cysteine 97.

It belongs to the Gfa family. Zn(2+) is required as a cofactor.

It catalyses the reaction S-(hydroxymethyl)glutathione = glutathione + formaldehyde. The protein operates within one-carbon metabolism; formaldehyde degradation; formate from formaldehyde (glutathione route): step 1/3. Functionally, catalyzes the condensation of formaldehyde and glutathione to S-hydroxymethylglutathione. This chain is Putative glutathione-dependent formaldehyde-activating enzyme, found in Phaeosphaeria nodorum (strain SN15 / ATCC MYA-4574 / FGSC 10173) (Glume blotch fungus).